The primary structure comprises 975 residues: Translation initiation factor IF-2 (975 aa).

Disordered stretches follow at residues 49-110 (KLSG…APKA) and 193-339 (AAAP…GRGA). A compositionally biased stretch (basic residues) spans 63-72 (KKTAARKAAP). Low complexity-rich tracts occupy residues 73 to 94 (KKAA…AKTP), 193 to 202 (AAAPEAPAPQ), and 209 to 225 (VVGT…ASAP). Over residues 308-318 (GADRGGRDFDK) the composition is skewed to basic and acidic residues. A compositionally biased stretch (low complexity) spans 324-336 (GPSAPAAGPAAAG). The 171-residue stretch at 469 to 639 (TRPPVVTVMG…KLVAEVAELK (171 aa)) folds into the tr-type G domain. Residues 478–485 (GHVDHGKT) form a G1 region. Position 478 to 485 (478 to 485 (GHVDHGKT)) interacts with GTP. Residues 503–507 (GITQH) form a G2 region. The tract at residues 525–528 (DTPG) is G3. GTP-binding positions include 525–529 (DTPGH) and 579–582 (NKID). Residues 579-582 (NKID) are G4. A G5 region spans residues 615–617 (SAL).

This sequence belongs to the TRAFAC class translation factor GTPase superfamily. Classic translation factor GTPase family. IF-2 subfamily.

It is found in the cytoplasm. One of the essential components for the initiation of protein synthesis. Protects formylmethionyl-tRNA from spontaneous hydrolysis and promotes its binding to the 30S ribosomal subunits. Also involved in the hydrolysis of GTP during the formation of the 70S ribosomal complex. In Bdellovibrio bacteriovorus (strain ATCC 15356 / DSM 50701 / NCIMB 9529 / HD100), this protein is Translation initiation factor IF-2.